A 318-amino-acid chain; its full sequence is Thymidylate synthase (318 aa).

DUMP-binding positions include Arg25 and 180 to 181; that span reads RR. The active-site Nucleophile is Cys200. DUMP-binding positions include 220–223, Asn231, and 261–263; these read RSGD and HIY. Asp223 contacts (6R)-5,10-methylene-5,6,7,8-tetrahydrofolate. Ala317 provides a ligand contact to (6R)-5,10-methylene-5,6,7,8-tetrahydrofolate.

This sequence belongs to the thymidylate synthase family. Bacterial-type ThyA subfamily. As to quaternary structure, homodimer.

The protein resides in the cytoplasm. The enzyme catalyses dUMP + (6R)-5,10-methylene-5,6,7,8-tetrahydrofolate = 7,8-dihydrofolate + dTMP. It functions in the pathway pyrimidine metabolism; dTTP biosynthesis. Its function is as follows. Catalyzes the reductive methylation of 2'-deoxyuridine-5'-monophosphate (dUMP) to 2'-deoxythymidine-5'-monophosphate (dTMP) while utilizing 5,10-methylenetetrahydrofolate (mTHF) as the methyl donor and reductant in the reaction, yielding dihydrofolate (DHF) as a by-product. This enzymatic reaction provides an intracellular de novo source of dTMP, an essential precursor for DNA biosynthesis. The chain is Thymidylate synthase from Bacillus thuringiensis subsp. konkukian (strain 97-27).